A 321-amino-acid polypeptide reads, in one-letter code: Chemotaxis protein CheV1 (321 aa).

The 159-residue stretch at 19–177 folds into the CheW-like domain; the sequence is ELQLLCFRLG…IEKMLIDVFP (159 aa). The Response regulatory domain maps to 198-319; that stretch reads CVLLADDSPS…IQRVVKQFLE (122 aa). Asp-252 carries the post-translational modification 4-aspartylphosphate.

Functionally, plays an essential role in chemotaxis signal transduction system in order to colonize the host stomach. May act as a phosphate sink to control the flow of phosphate to CheAY. The sequence is that of Chemotaxis protein CheV1 from Helicobacter pylori (strain ATCC 700392 / 26695) (Campylobacter pylori).